The primary structure comprises 393 residues: Acetyl-CoA acetyltransferase (393 aa).

The active-site Acyl-thioester intermediate is the C88. Catalysis depends on proton acceptor residues H349 and C379.

Belongs to the thiolase-like superfamily. Thiolase family.

Its subcellular location is the cytoplasm. It carries out the reaction 2 acetyl-CoA = acetoacetyl-CoA + CoA. It participates in metabolic intermediate biosynthesis; (R)-mevalonate biosynthesis; (R)-mevalonate from acetyl-CoA: step 1/3. This chain is Acetyl-CoA acetyltransferase (atoB), found in Pseudomonas aeruginosa (strain ATCC 15692 / DSM 22644 / CIP 104116 / JCM 14847 / LMG 12228 / 1C / PRS 101 / PAO1).